We begin with the raw amino-acid sequence, 323 residues long: Fructose-1,6-bisphosphatase class 1 (323 aa).

4 residues coordinate Mg(2+): E88, D107, L109, and D110. Substrate-binding positions include 110–113 and N200; that span reads DGSS. E272 is a Mg(2+) binding site.

Belongs to the FBPase class 1 family. As to quaternary structure, homotetramer. The cofactor is Mg(2+).

The protein resides in the cytoplasm. It carries out the reaction beta-D-fructose 1,6-bisphosphate + H2O = beta-D-fructose 6-phosphate + phosphate. It functions in the pathway carbohydrate biosynthesis; gluconeogenesis. This Acinetobacter baylyi (strain ATCC 33305 / BD413 / ADP1) protein is Fructose-1,6-bisphosphatase class 1.